A 258-amino-acid chain; its full sequence is F-box/SPRY domain-containing protein 1 (258 aa).

In terms of domain architecture, F-box spans 6–54 (TEYAPDIPDNVLELIFSYLKLQDLRNCSLVCKSWNRFLNDENNEVWRAQ). In terms of domain architecture, B30.2/SPRY spans 64–256 (FKTDLLSVVP…ISMVYLGPPL (193 aa)).

The protein belongs to the FBXO45/Fsn family. Component of an E3 ubiquitin ligase complex composed of hiw and Fsn.

It is found in the synapse. It participates in protein modification; protein ubiquitination. In terms of biological role, required in the presynaptic motoneuron to down-regulate the levels of wnd and restrain synaptic terminal growth at the neuromuscular junction (NMJ). This is F-box/SPRY domain-containing protein 1 from Aedes aegypti (Yellowfever mosquito).